A 302-amino-acid chain; its full sequence is Protoheme IX farnesyltransferase (302 aa).

Helical transmembrane passes span 28-48, 50-70, 95-115, 122-142, 150-170, 176-196, 221-241, 243-263, and 282-302; these read VVAL…PGVP, WSVL…AAVV, IAPL…MVVL, LTAW…TLFL, IVIG…AVTG, ALLL…ALAI, LHIL…FVTG, SGGI…QYAV, and ITYL…FVPA.

Belongs to the UbiA prenyltransferase family. Protoheme IX farnesyltransferase subfamily.

It localises to the cell inner membrane. The catalysed reaction is heme b + (2E,6E)-farnesyl diphosphate + H2O = Fe(II)-heme o + diphosphate. Its pathway is porphyrin-containing compound metabolism; heme O biosynthesis; heme O from protoheme: step 1/1. In terms of biological role, converts heme B (protoheme IX) to heme O by substitution of the vinyl group on carbon 2 of heme B porphyrin ring with a hydroxyethyl farnesyl side group. This chain is Protoheme IX farnesyltransferase, found in Marinobacter nauticus (strain ATCC 700491 / DSM 11845 / VT8) (Marinobacter aquaeolei).